Reading from the N-terminus, the 275-residue chain is Rhamnulose-1-phosphate aldolase (275 aa).

Glutamate 117 is an active-site residue. Residues histidine 141, histidine 143, and histidine 212 each coordinate Zn(2+).

Belongs to the aldolase class II family. RhaD subfamily. In terms of assembly, homotetramer. It depends on Zn(2+) as a cofactor.

It localises to the cytoplasm. The catalysed reaction is L-rhamnulose 1-phosphate = (S)-lactaldehyde + dihydroxyacetone phosphate. It participates in carbohydrate degradation; L-rhamnose degradation; glycerone phosphate from L-rhamnose: step 3/3. Functionally, catalyzes the reversible cleavage of L-rhamnulose-1-phosphate to dihydroxyacetone phosphate (DHAP) and L-lactaldehyde. In Salmonella paratyphi B (strain ATCC BAA-1250 / SPB7), this protein is Rhamnulose-1-phosphate aldolase.